Here is a 164-residue protein sequence, read N- to C-terminus: Ubiquitin-fold modifier-conjugating enzyme 1 (164 aa).

C116 (glycyl thioester intermediate) is an active-site residue.

This sequence belongs to the ubiquitin-conjugating enzyme family. UFC1 subfamily.

E2-like enzyme which forms an intermediate with UFM1 via a thioester linkage. The polypeptide is Ubiquitin-fold modifier-conjugating enzyme 1 (Drosophila erecta (Fruit fly)).